We begin with the raw amino-acid sequence, 206 residues long: Thymidylate kinase (206 aa).

Position 11–18 (11–18 (GPEGAGKT)) interacts with ATP.

The protein belongs to the thymidylate kinase family.

It catalyses the reaction dTMP + ATP = dTDP + ADP. Its function is as follows. Phosphorylation of dTMP to form dTDP in both de novo and salvage pathways of dTTP synthesis. In Deinococcus radiodurans (strain ATCC 13939 / DSM 20539 / JCM 16871 / CCUG 27074 / LMG 4051 / NBRC 15346 / NCIMB 9279 / VKM B-1422 / R1), this protein is Thymidylate kinase (tmk).